The following is a 255-amino-acid chain: Aliphatic sulfonates import ATP-binding protein SsuB (255 aa).

The ABC transporter domain occupies 12-233 (LLLNAVSKHY…RLGSVRLAEL (222 aa)). ATP is bound at residue 44-51 (GRSGGGKS).

It belongs to the ABC transporter superfamily. Aliphatic sulfonates importer (TC 3.A.1.17.2) family. As to quaternary structure, the complex is composed of two ATP-binding proteins (SsuB), two transmembrane proteins (SsuC) and a solute-binding protein (SsuA).

Its subcellular location is the cell inner membrane. The enzyme catalyses ATP + H2O + aliphatic sulfonate-[sulfonate-binding protein]Side 1 = ADP + phosphate + aliphatic sulfonateSide 2 + [sulfonate-binding protein]Side 1.. Functionally, part of the ABC transporter complex SsuABC involved in aliphatic sulfonates import. Responsible for energy coupling to the transport system. This is Aliphatic sulfonates import ATP-binding protein SsuB from Shigella flexneri.